The primary structure comprises 335 residues: 7,8-didemethyl-8-hydroxy-5-deazariboflavin synthase (335 aa).

Residues 1–246 (MTYSKNVFIP…QVAPNLIDPK (246 aa)) enclose the Radical SAM core domain. Residues Cys15, Cys19, and Cys22 each coordinate [4Fe-4S] cluster.

The protein belongs to the radical SAM superfamily. CofG family. As to quaternary structure, consists of two subunits, CofG and CofH. Requires [4Fe-4S] cluster as cofactor.

The catalysed reaction is 5-amino-5-(4-hydroxybenzyl)-6-(D-ribitylimino)-5,6-dihydrouracil + S-adenosyl-L-methionine = 7,8-didemethyl-8-hydroxy-5-deazariboflavin + 5'-deoxyadenosine + L-methionine + NH4(+) + H(+). The protein operates within cofactor biosynthesis; coenzyme F0 biosynthesis. Its function is as follows. Catalyzes the radical-mediated synthesis of 7,8-didemethyl-8-hydroxy-5-deazariboflavin from 5-amino-5-(4-hydroxybenzyl)-6-(D-ribitylimino)-5,6-dihydrouracil. In Methanosarcina mazei (strain ATCC BAA-159 / DSM 3647 / Goe1 / Go1 / JCM 11833 / OCM 88) (Methanosarcina frisia), this protein is 7,8-didemethyl-8-hydroxy-5-deazariboflavin synthase.